We begin with the raw amino-acid sequence, 162 residues long: Large ribosomal subunit protein uL10 (162 aa).

The protein belongs to the universal ribosomal protein uL10 family. In terms of assembly, part of the ribosomal stalk of the 50S ribosomal subunit. The N-terminus interacts with L11 and the large rRNA to form the base of the stalk. The C-terminus forms an elongated spine to which L12 dimers bind in a sequential fashion forming a multimeric L10(L12)X complex.

Functionally, forms part of the ribosomal stalk, playing a central role in the interaction of the ribosome with GTP-bound translation factors. This Borrelia duttonii (strain Ly) protein is Large ribosomal subunit protein uL10.